Consider the following 156-residue polypeptide: Cytochrome c-type biogenesis protein CcmE 1 (156 aa).

Topologically, residues methionine 1 to arginine 8 are cytoplasmic. Residues leucine 9 to alanine 29 form a helical; Signal-anchor for type II membrane protein membrane-spanning segment. Topologically, residues leucine 30 to arginine 156 are periplasmic. 2 residues coordinate heme: histidine 123 and tyrosine 127.

It belongs to the CcmE/CycJ family.

The protein resides in the cell inner membrane. Heme chaperone required for the biogenesis of c-type cytochromes. Transiently binds heme delivered by CcmC and transfers the heme to apo-cytochromes in a process facilitated by CcmF and CcmH. This Xanthomonas axonopodis pv. citri (strain 306) protein is Cytochrome c-type biogenesis protein CcmE 1.